The following is a 462-amino-acid chain: Anthranilate synthase component 1 (462 aa).

Residues serine 37 and 244–246 (PYM) each bind L-tryptophan. A chorismate-binding site is contributed by 279-280 (GT). Glutamate 306 contacts Mg(2+). Chorismate is bound by residues tyrosine 394, arginine 414, 428–430 (GAG), and glycine 430. Glutamate 443 serves as a coordination point for Mg(2+).

Belongs to the anthranilate synthase component I family. Heterotetramer consisting of two non-identical subunits: a beta subunit (TrpG) and a large alpha subunit (TrpE). Mg(2+) serves as cofactor.

The enzyme catalyses chorismate + L-glutamine = anthranilate + pyruvate + L-glutamate + H(+). The protein operates within amino-acid biosynthesis; L-tryptophan biosynthesis; L-tryptophan from chorismate: step 1/5. With respect to regulation, feedback inhibited by tryptophan. Functionally, part of a heterotetrameric complex that catalyzes the two-step biosynthesis of anthranilate, an intermediate in the biosynthesis of L-tryptophan. In the first step, the glutamine-binding beta subunit (TrpG) of anthranilate synthase (AS) provides the glutamine amidotransferase activity which generates ammonia as a substrate that, along with chorismate, is used in the second step, catalyzed by the large alpha subunit of AS (TrpE) to produce anthranilate. In the absence of TrpG, TrpE can synthesize anthranilate directly from chorismate and high concentrations of ammonia. The sequence is that of Anthranilate synthase component 1 (trpE) from Thermus thermophilus (strain ATCC 27634 / DSM 579 / HB8).